The chain runs to 245 residues: Eukaryotic translation initiation factor 4E type 2 (245 aa).

Basic and acidic residues predominate over residues methionine 1 to asparagine 38. The disordered stretch occupies residues methionine 1–alanine 52. Serine 13 bears the Phosphoserine mark. Residues histidine 54–glutamine 57 are EIF4EBP1/2/3 binding. MRNA is bound at residue tyrosine 78–glutamate 79. Residues tryptophan 95 to serine 99 form an EIF4EBP1/2/3 binding region. MRNA contacts are provided by residues histidine 110 and tryptophan 124–glutamate 125. Position 134 is an N6-acetyllysine; alternate (lysine 134). Lysine 134 participates in a covalent cross-link: Glycyl lysine isopeptide (Lys-Gly) (interchain with G-Cter in ISG15); alternate. Residues asparagine 150–glycine 157 form an EIF4EBP1/2/3 binding region. MRNA contacts are provided by residues arginine 174–isoleucine 179 and lysine 222–proline 224. Residue lysine 222 forms a Glycyl lysine isopeptide (Lys-Gly) (interchain with G-Cter in ISG15) linkage.

The protein belongs to the eukaryotic initiation factor 4E family. As to quaternary structure, interacts with EIF4EBP1, EIF4EBP2 and EIF4EBP3. Does not interact with eIF4G (EIF4G1, EIF4G2 or EIF4G3). Component of the 4EHP-GYF2 complex, at least composed of EIF4E2, GIGYF2 and ZNF598. Interacts with GIGYF2 (via the 4EHP-binding motif); the interaction is direct. Interacts with EIF4ENIF1/4E-T (via YXXXXLphi motif); increasing affinity for the 7-methylguanosine-containing mRNA cap. Ubiquitinated by ARIH1. The consequences of ubiquitination are however unclear: according to a report, EIF4E2 ubiquitination leads to promote EIF4E2 cap-binding and protein translation arrest. According to another report ubiquitination leads to its subsequent degradation. Post-translationally, ISGylation enhances its cap structure-binding activity and translation-inhibition activity.

The protein localises to the cytoplasm. It localises to the P-body. Recognizes and binds the 7-methylguanosine-containing mRNA cap during an early step in the initiation. Acts as a repressor of translation initiation. In contrast to EIF4E, it is unable to bind eIF4G (EIF4G1, EIF4G2 or EIF4G3), suggesting that it acts by competing with EIF4E and block assembly of eIF4F at the cap. In P-bodies, component of a complex that promotes miRNA-mediated translational repression. Involved in virus-induced host response by mediating miRNA MIR34A-induced translational silencing which controls IFNB1 production by a negative feedback mechanism. In terms of biological role, component of the 4EHP-GYF2 complex, a multiprotein complex that acts as a repressor of translation initiation. In association with GIGYF2, assists ribosome-associated quality control (RQC) by sequestering the mRNA cap, blocking ribosome initiation and decreasing the translational load on problematic messages. Part of a pathway that works in parallel to RQC-mediated degradation of the stalled nascent polypeptide. GIGYF2 and EIF4E2 work downstream and independently of ZNF598, which seems to work as a scaffold that can recruit them to faulty mRNA even if alternative recruitment mechanisms may exist. Functionally, (Microbial infection) Upon SARS coronavirus-2/SARS-CoV-2 infection, the interaction with non-structural protein 2 (nsp2) with GIGYF2 enhances GIGYF2 binding to EIF4E2 and increases repression of translation initiation of genes involved in antiviral innate immune response such as IFNB1. The chain is Eukaryotic translation initiation factor 4E type 2 from Homo sapiens (Human).